Here is a 522-residue protein sequence, read N- to C-terminus: Protein nucleotidyltransferase YdiU (522 aa).

8 residues coordinate ATP: Gly109, Gly111, Arg112, Lys132, Asp144, Gly145, Arg195, and Arg202. Asp271 acts as the Proton acceptor in catalysis. Mg(2+) is bound by residues Asn272 and Asp281. Asp281 provides a ligand contact to ATP.

It belongs to the SELO family. Mg(2+) is required as a cofactor. Requires Mn(2+) as cofactor.

It catalyses the reaction L-seryl-[protein] + ATP = 3-O-(5'-adenylyl)-L-seryl-[protein] + diphosphate. The catalysed reaction is L-threonyl-[protein] + ATP = 3-O-(5'-adenylyl)-L-threonyl-[protein] + diphosphate. The enzyme catalyses L-tyrosyl-[protein] + ATP = O-(5'-adenylyl)-L-tyrosyl-[protein] + diphosphate. It carries out the reaction L-histidyl-[protein] + UTP = N(tele)-(5'-uridylyl)-L-histidyl-[protein] + diphosphate. It catalyses the reaction L-seryl-[protein] + UTP = O-(5'-uridylyl)-L-seryl-[protein] + diphosphate. The catalysed reaction is L-tyrosyl-[protein] + UTP = O-(5'-uridylyl)-L-tyrosyl-[protein] + diphosphate. In terms of biological role, nucleotidyltransferase involved in the post-translational modification of proteins. It can catalyze the addition of adenosine monophosphate (AMP) or uridine monophosphate (UMP) to a protein, resulting in modifications known as AMPylation and UMPylation. In Burkholderia vietnamiensis (strain G4 / LMG 22486) (Burkholderia cepacia (strain R1808)), this protein is Protein nucleotidyltransferase YdiU.